The sequence spans 130 residues: Ion transport peptide (130 aa).

Disulfide bonds link cysteine 62/cysteine 98, cysteine 78/cysteine 94, and cysteine 81/cysteine 107. Leucine 127 carries the post-translational modification Leucine amide.

The protein belongs to the arthropod CHH/MIH/GIH/VIH hormone family. Brain and corpus cardiacum.

It is found in the secreted. Its function is as follows. Stimulates salt and water reabsorption and inhibits acid secretion in the ileum of S.gregaria. This is Ion transport peptide from Schistocerca gregaria (Desert locust).